Here is a 430-residue protein sequence, read N- to C-terminus: Enolase (430 aa).

Gln165 is a binding site for (2R)-2-phosphoglycerate. The active-site Proton donor is the Glu207. The Mg(2+) site is built by Asp244, Glu287, and Asp314. (2R)-2-phosphoglycerate-binding residues include Lys339, Arg368, Ser369, and Lys390. Residue Lys339 is the Proton acceptor of the active site.

This sequence belongs to the enolase family. Component of the RNA degradosome, a multiprotein complex involved in RNA processing and mRNA degradation. Mg(2+) is required as a cofactor.

It localises to the cytoplasm. It is found in the secreted. Its subcellular location is the cell surface. The catalysed reaction is (2R)-2-phosphoglycerate = phosphoenolpyruvate + H2O. Its pathway is carbohydrate degradation; glycolysis; pyruvate from D-glyceraldehyde 3-phosphate: step 4/5. Functionally, catalyzes the reversible conversion of 2-phosphoglycerate (2-PG) into phosphoenolpyruvate (PEP). It is essential for the degradation of carbohydrates via glycolysis. The polypeptide is Enolase (Xylella fastidiosa (strain M23)).